Consider the following 540-residue polypeptide: Chaperonin GroEL 4 (540 aa).

Residues 29-32, 86-90, G413, 477-479, and D493 contribute to the ATP site; these read TLGP, DGTTT, and NAA.

It belongs to the chaperonin (HSP60) family. Forms a cylinder of 14 subunits composed of two heptameric rings stacked back-to-back. Interacts with the co-chaperonin GroES.

It is found in the cytoplasm. The catalysed reaction is ATP + H2O + a folded polypeptide = ADP + phosphate + an unfolded polypeptide.. In terms of biological role, together with its co-chaperonin GroES, plays an essential role in assisting protein folding. The GroEL-GroES system forms a nano-cage that allows encapsulation of the non-native substrate proteins and provides a physical environment optimized to promote and accelerate protein folding. This is Chaperonin GroEL 4 from Frankia alni (strain DSM 45986 / CECT 9034 / ACN14a).